Consider the following 916-residue polypeptide: Translation initiation factor IF-2 (916 aa).

The segment at 50 to 326 (NRDKESTSQP…NSTLQQGFNK (277 aa)) is disordered. Residues 109 to 241 (AQREAEEKAR…LAEENAEKWT (133 aa)) are compositionally biased toward basic and acidic residues. Residues 277–291 (GRGRAAKAPRPKKNN) show a composition bias toward basic residues. Positions 292–304 (RHSEKADREEARA) are enriched in basic and acidic residues. The region spanning 415–584 (SRAPVVTIMG…LLQAEVLELK (170 aa)) is the tr-type G domain. The interval 424–431 (GHVDHGKT) is G1. Residue 424–431 (GHVDHGKT) participates in GTP binding. A G2 region spans residues 449 to 453 (GITQH). Positions 470–473 (DTPG) are G3. GTP-binding positions include 470 to 474 (DTPGH) and 524 to 527 (NKID). Residues 524 to 527 (NKID) form a G4 region. The interval 560–562 (SAK) is G5.

This sequence belongs to the TRAFAC class translation factor GTPase superfamily. Classic translation factor GTPase family. IF-2 subfamily.

The protein localises to the cytoplasm. Functionally, one of the essential components for the initiation of protein synthesis. Protects formylmethionyl-tRNA from spontaneous hydrolysis and promotes its binding to the 30S ribosomal subunits. Also involved in the hydrolysis of GTP during the formation of the 70S ribosomal complex. The sequence is that of Translation initiation factor IF-2 from Proteus mirabilis (strain HI4320).